The following is a 30-amino-acid chain: Cycloviolacin-H3 (30 aa).

The cyclopeptide (Gly-Asn) cross-link spans 1–30; sequence GLPVCGETCFGGTCNTPGCICDPWPVCTRN. 3 disulfides stabilise this stretch: Cys-5–Cys-19, Cys-9–Cys-21, and Cys-14–Cys-27.

This is a cyclic peptide.

Functionally, probably participates in a plant defense mechanism. This is Cycloviolacin-H3 from Viola hederacea (Australian violet).